A 126-amino-acid polypeptide reads, in one-letter code: Small ribosomal subunit protein uS11 (126 aa).

It belongs to the universal ribosomal protein uS11 family. In terms of assembly, part of the 30S ribosomal subunit.

In terms of biological role, located on the platform of the 30S subunit. This Methanosarcina mazei (strain ATCC BAA-159 / DSM 3647 / Goe1 / Go1 / JCM 11833 / OCM 88) (Methanosarcina frisia) protein is Small ribosomal subunit protein uS11.